The sequence spans 177 residues: Protein SPMIP1 (177 aa).

Residues 47-80 (SRLPRKLPTLLPQASVAPPPPASKTTPSKAPSPA) form a disordered region.

This Mus musculus (Mouse) protein is Protein SPMIP1 (Spmip1).